Reading from the N-terminus, the 440-residue chain is COP9 signalosome complex subunit 4 (440 aa).

The 171-residue stretch at 216–386 (SNRQFLAASQ…RIIYFESGLE (171 aa)) folds into the PCI domain.

The protein belongs to the CSN4 family. Component of the COP9 signalosome (CSN) complex.

The protein resides in the cytoplasm. It is found in the nucleus. In terms of biological role, component of the COP9 signalosome (CSN) complex that acts as an regulator of the ubiquitin (Ubl) conjugation pathway by mediating the deneddylation of the cullin subunit of SCF-type E3 ubiquitin-protein ligase complexes. The CSN complex is involved in the regulation of the circadian clock through its control of the stability of the SCF(FWD1) complex. This chain is COP9 signalosome complex subunit 4 (csn-4), found in Neurospora crassa (strain ATCC 24698 / 74-OR23-1A / CBS 708.71 / DSM 1257 / FGSC 987).